We begin with the raw amino-acid sequence, 580 residues long: Pescadillo homolog (580 aa).

Acidic residues predominate over residues 291-303 (EPEEENEVDEFPA). Residues 291 to 321 (EPEEENEVDEFPADPENAGQEEEQKKQLQEE) are disordered. The span at 312 to 321 (EEQKKQLQEE) shows a compositional bias: basic and acidic residues. A BRCT domain is found at 323–416 (KHKSMFVGLK…MLLPVEDYFP (94 aa)). Residues 448–496 (KGENPEDDDDDDEEDDEDEEEDDEDEDDEENEEEEEDKKLRHLENKKVG) form a disordered region. The span at 452 to 483 (PEDDDDDDEEDDEDEEEDDEDEDDEENEEEEE) shows a compositional bias: acidic residues. The span at 484–494 (DKKLRHLENKK) shows a compositional bias: basic and acidic residues.

The protein belongs to the pescadillo family. As to quaternary structure, component of the PeBoW complex, composed of bop1, pes1 and wdr12. The complex is held together by bop1, which interacts with pes1 via its N-terminal domain and with wdr12 via a high-affinity interaction between the seven-bladed beta-propeller domains of the 2 proteins. The PeBoW complex associates with the 66S pre-ribosome.

The protein resides in the nucleus. It localises to the nucleolus. The protein localises to the nucleoplasm. Functionally, component of the PeBoW complex, which is required for maturation of 28S and 5.8S ribosomal RNAs and formation of the 60S ribosome. The chain is Pescadillo homolog (pes1) from Xenopus tropicalis (Western clawed frog).